A 484-amino-acid polypeptide reads, in one-letter code: ATP-dependent rRNA helicase RRP3 (484 aa).

2 stretches are compositionally biased toward low complexity: residues 1-14 and 22-34; these read MPSPSPEASSSMSQ and PSPASSNPDAPEA. The tract at residues 1–38 is disordered; it reads MPSPSPEASSSMSQPGPPSRSPSPASSNPDAPEASHNK. A Q motif motif is present at residues 38-66; that stretch reads KTFADLGISPELCRACASMGFKKPSDIQA. A Helicase ATP-binding domain is found at 69–240; sequence IPHALEGKDI…RASLNKPVRV (172 aa). 82–89 provides a ligand contact to ATP; the sequence is AQTGSGKT. The short motif at 188–191 is the DEAD box element; the sequence is DEAD. The Helicase C-terminal domain maps to 263–411; sequence NKDAYLLYLA…SFDVDKEAVA (149 aa). Residues 425–484 form a disordered region; it reads ALEMRESGTGGGGGKRGRDKGKRKTFGDGDDRDRDDDVVEAGVPRKKNKFTPGGKKKARK. 2 stretches are compositionally biased toward basic residues: residues 439 to 448 and 468 to 484; these read KRGRDKGKRK and PRKKNKFTPGGKKKARK.

It belongs to the DEAD box helicase family. DDX47/RRP3 subfamily. In terms of assembly, interacts with the SSU processome.

The protein resides in the nucleus. The enzyme catalyses ATP + H2O = ADP + phosphate + H(+). Its function is as follows. ATP-dependent rRNA helicase required for pre-ribosomal RNA processing. Involved in the maturation of the 35S-pre-rRNA and to its cleavage to mature 18S rRNA. The sequence is that of ATP-dependent rRNA helicase RRP3 from Cryptococcus neoformans var. neoformans serotype D (strain B-3501A) (Filobasidiella neoformans).